The primary structure comprises 304 residues: Nod factor export ATP-binding protein I (304 aa).

One can recognise an ABC transporter domain in the interval Ile-6–Tyr-236. ATP is bound at residue Gly-38–Thr-45.

The protein belongs to the ABC transporter superfamily. Lipooligosaccharide exporter (TC 3.A.1.102) family. The complex is composed of two ATP-binding proteins (NodI) and two transmembrane proteins (NodJ).

Its subcellular location is the cell inner membrane. Part of the ABC transporter complex NodIJ involved in the export of the nodulation factors (Nod factors), the bacterial signal molecules that induce symbiosis and subsequent nodulation induction. Nod factors are LCO (lipo-chitin oligosaccharide), a modified beta-1,4-linked N-acetylglucosamine oligosaccharide. This subunit is responsible for energy coupling to the transport system. The polypeptide is Nod factor export ATP-binding protein I (Burkholderia orbicola (strain AU 1054)).